The primary structure comprises 173 residues: Alpha-crystallin A chain (173 aa).

Met1 carries the post-translational modification N-acetylmethionine. The tract at residues 1–63 is required for complex formation with BFSP1 and BFSP2; it reads MDVTIQHPWF…RTVLDSGISE (63 aa). Gln6 is subject to Deamidated glutamine; partial. At Ser45 the chain carries Phosphoserine. Gln50 bears the Deamidated glutamine; partial mark. The sHSP domain maps to 52–162; the sequence is LFRTVLDSGI…GHSERAIPVS (111 aa). At Lys70 the chain carries N6-acetyllysine. Residue Gln90 is modified to Deamidated glutamine; partial. N6-acetyllysine is present on Lys99. Zn(2+) contacts are provided by His100, Glu102, and His107. Ser122 carries the post-translational modification Phosphoserine. Deamidated asparagine; partial is present on Asn123. The segment at 145 to 173 is disordered; sequence KVQSGLDAGHSERAIPVSREEKPSSAPSS. Gln147 carries the post-translational modification Deamidated glutamine; partial. Residues 153–167 are compositionally biased toward basic and acidic residues; the sequence is GHSERAIPVSREEKP. His154 is a Zn(2+) binding site. An O-linked (GlcNAc) serine glycan is attached at Ser162.

Belongs to the small heat shock protein (HSP20) family. In terms of assembly, heteromer composed of three CRYAA and one CRYAB subunits. Inter-subunit bridging via zinc ions enhances stability, which is crucial as there is no protein turn over in the lens. Can also form homodimers and homotetramers (dimers of dimers) which serve as the building blocks of homooligomers. Within homooligomers, the zinc-binding motif is created from residues of 3 different molecules. His-100 and Glu-102 from one molecule are ligands of the zinc ion, and His-107 and His-154 residues from additional molecules complete the site with tetrahedral coordination geometry. Part of a complex required for lens intermediate filament formation composed of BFSP1, BFSP2 and CRYAA. Acetylation at Lys-70 may increase chaperone activity. In terms of processing, undergoes age-dependent proteolytical cleavage at the C-terminus.

It is found in the cytoplasm. Its subcellular location is the nucleus. Contributes to the transparency and refractive index of the lens. Acts as a chaperone, preventing aggregation of various proteins under a wide range of stress conditions. Required for the correct formation of lens intermediate filaments as part of a complex composed of BFSP1, BFSP2 and CRYAA. This Ochotona princeps (Southern American pika) protein is Alpha-crystallin A chain (CRYAA).